Reading from the N-terminus, the 258-residue chain is MSRRQVRRVGDSGSFPFVGALHSKSRSSPLLSVCLVLVGACLLIGYAYSGPGMFKSIREVSKITGDYSCTAEVQRAIPILKSAYGDSMRKVLHVGPETCSVVSSLLNEEETEAWGVEPYDVEDADSNCKSLLHKGLVRVADIKFPLPYRSKSFSLVIVSDALDYLSPRYLNKTVPELARVASDGVVLLAGNPGQQKAKGGELSKFGRPAKMRSSSWWIRFFSQTNLEENEAASKKFEQAASKSSYKPACQVFHLKPLH.

At 1–29 (MSRRQVRRVGDSGSFPFVGALHSKSRSSP) the chain is on the cytoplasmic side. A helical transmembrane segment spans residues 30 to 50 (LLSVCLVLVGACLLIGYAYSG). Over 51–258 (PGMFKSIREV…CQVFHLKPLH (208 aa)) the chain is Lumenal. An N-linked (GlcNAc...) asparagine glycan is attached at Asn-171.

The protein belongs to the class I-like SAM-binding methyltransferase superfamily.

It localises to the golgi apparatus membrane. Functionally, together with CGR2, required for homogalacturonan pectins (HG) methylesterification in the Golgi apparatus prior to integration into cell walls, essential for general growth and development. Promotes petiole elongation. Impacts photosynthesis and respiration efficiency by influencing leaf mesophyll morphology and physiology; pectin methylesterification modulates both expansion and positioning of cells in leaves, probably by changing cell walls plasticity. In Arabidopsis thaliana (Mouse-ear cress), this protein is Probable pectin methylesterase CGR3.